A 401-amino-acid chain; its full sequence is Probable cysteine desulfurase (401 aa).

Lysine 216 bears the N6-(pyridoxal phosphate)lysine mark.

This sequence belongs to the class-V pyridoxal-phosphate-dependent aminotransferase family. Csd subfamily. It depends on pyridoxal 5'-phosphate as a cofactor.

The catalysed reaction is (sulfur carrier)-H + L-cysteine = (sulfur carrier)-SH + L-alanine. The sequence is that of Probable cysteine desulfurase (csd) from Pyrococcus abyssi (strain GE5 / Orsay).